The chain runs to 714 residues: Protein BLISTER (714 aa).

Disordered stretches follow at residues M1 to S113, S219 to R261, V288 to Y325, and M519 to T576. A compositionally biased stretch (basic and acidic residues) spans R8–K33. 2 stretches are compositionally biased toward polar residues: residues S36–I50 and S58–E74. Over residues D92 to D102 the composition is skewed to basic and acidic residues. Polar residues-rich tracts occupy residues S219 to S253, V288 to G297, N313 to A322, and M519 to Q561. The stretch at N356–S525 forms a coiled coil. Positions E562–T576 are enriched in low complexity.

Interacts with CLF. Expressed in root tips, emerging lateral roots, shoot apical meristem (SAM), vasculature of cotyledons, leaves, sepals and carpels.

It localises to the nucleus. The protein resides in the cytoplasm. Is required for normal leaf, flower and seed development and controls cotyledon and leaf patterning by inhibiting premature differentiation. Regulates the expression of a subset of PcG target genes. Is required for the repression of the floral specific genes PI, SEP2, and SEP3, but also for the activation of FLC. Involved in response to cold. Involved in the regulation of COR15A, COR15B, BAM3 and AMY3 transcripts, and ascorbate levels in response to prolonged chilling temperatures. This chain is Protein BLISTER, found in Arabidopsis thaliana (Mouse-ear cress).